Here is a 190-residue protein sequence, read N- to C-terminus: MANLKLLLVGIGNPGQKYVHNRHNIGFVILDSLLDSSSVSYQTNSKYSLARTDEDGVTIFYLKPLEFMNLSGKSVAEIAKKNGISPENILIIHDEIDFEFGKLKLKGGGGHAGHNGLRNIVEKLGTNTFFRLRFGVGKPSITSEVPDYVLSNFLPNEKEKIPELVKVSLQKISDWIRERKNGFQKLSDNQ.

A tRNA-binding site is contributed by Tyr18. The active-site Proton acceptor is His23. The tRNA site is built by Phe67, Asn69, and Asn115.

The protein belongs to the PTH family. As to quaternary structure, monomer.

The protein resides in the cytoplasm. It catalyses the reaction an N-acyl-L-alpha-aminoacyl-tRNA + H2O = an N-acyl-L-amino acid + a tRNA + H(+). In terms of biological role, hydrolyzes ribosome-free peptidyl-tRNAs (with 1 or more amino acids incorporated), which drop off the ribosome during protein synthesis, or as a result of ribosome stalling. Catalyzes the release of premature peptidyl moieties from peptidyl-tRNA molecules trapped in stalled 50S ribosomal subunits, and thus maintains levels of free tRNAs and 50S ribosomes. The sequence is that of Peptidyl-tRNA hydrolase from Leptospira interrogans serogroup Icterohaemorrhagiae serovar Lai (strain 56601).